The following is a 178-amino-acid chain: Neuroblastoma suppressor of tumorigenicity 1 (178 aa).

Residues 1–16 (MLWVLVGTVLPVMLLA) form the signal peptide. Disulfide bonds link C34-C84, C48-C98, C58-C117, C62-C119, and C81-C122. The CTCK domain maps to 34–123 (CEAKNITQIV…IVHCSCQACG (90 aa)). The tract at residues 130-178 (GLNVYMQGEDGPGSQPGSHSHSHPHPGCQTPEPEEPPGAPQVEEEGAED) is disordered.

It belongs to the DAN family. Homodimer. Most abundant in lung, brain, intestine and kidney.

The protein localises to the secreted. Possible candidate as a tumor suppressor gene of neuroblastoma. May play an important role in preventing cells from entering the final stage (G1/S) of the transformation process. This Rattus norvegicus (Rat) protein is Neuroblastoma suppressor of tumorigenicity 1 (Nbl1).